A 377-amino-acid polypeptide reads, in one-letter code: N-acetyldiaminopimelate deacetylase (377 aa).

Residue Asp70 is part of the active site. The active-site Proton acceptor is Glu129.

Belongs to the peptidase M20A family. N-acetyldiaminopimelate deacetylase subfamily.

The enzyme catalyses N-acetyl-(2S,6S)-2,6-diaminopimelate + H2O = (2S,6S)-2,6-diaminopimelate + acetate. It participates in amino-acid biosynthesis; L-lysine biosynthesis via DAP pathway; LL-2,6-diaminopimelate from (S)-tetrahydrodipicolinate (acetylase route): step 3/3. Functionally, catalyzes the conversion of N-acetyl-diaminopimelate to diaminopimelate and acetate. The chain is N-acetyldiaminopimelate deacetylase from Streptococcus thermophilus (strain ATCC BAA-491 / LMD-9).